We begin with the raw amino-acid sequence, 496 residues long: Iroquois-class homeodomain protein irx-4-A (496 aa).

Residues 141–203 (GSSRRKNATR…NARRRLKKEN (63 aa)) constitute a DNA-binding region (homeobox; TALE-type). The disordered stretch occupies residues 203–246 (NKMTWPPRNKCSDEKRPYDEEEEEEEEEEDSQKATIKNEKKTVD). The segment covering 221-232 (DEEEEEEEEEED) has biased composition (acidic residues).

Belongs to the TALE/IRO homeobox family. In terms of tissue distribution, expressed in the neural plate in overlapping patterns with other irx members, which all share an anterior border of expression. At stage 20, expressed in a subset of cells in the developing hindbrain with expression appearing above the otic vesicle by stage 26. Expression in retina cells begins at stage 28, continuing at later stages and is limited to a subset of retinal cells of the optic cup. Also expressed in the ventricle of the heart from stage 36 (late tailbud) onwards. Only expressed in the pronephros at tadpole stage.

It localises to the nucleus. Functionally, acts partially redundantly with other irx members in neural patterning. Required for formation of the posterior forebrain, midbrain, hindbrain, and to a lesser extent, spinal cord. Patterns the neuroectoderm in both the anterior/posterior and dorsal/ventral axes. Does not appear to play a role in pronephros kidney development. The protein is Iroquois-class homeodomain protein irx-4-A (irx4-a) of Xenopus laevis (African clawed frog).